The chain runs to 338 residues: mRNA decay activator protein ZFP36L1 (338 aa).

A necessary and sufficient for the association with mRNA decay enzymes and mRNA decay activation region spans residues Met-1–Asn-111. A Phosphoserine; by MAPKAPK2 modification is found at Ser-54. A disordered region spans residues Leu-71–Ser-113. Over residues Arg-82–Glu-96 the composition is skewed to basic and acidic residues. Ser-90 is modified (phosphoserine; by PKB/AKT1). Ser-92 bears the Phosphoserine; by PKB/AKT1 and MAPKAPK2 mark. The segment covering Thr-101–Ser-113 has biased composition (polar residues). C3H1-type zinc fingers lie at residues Arg-114–His-142 and Lys-152–Glu-180. Residues Leu-185 to Asp-338 are necessary for mRNA decay activation. A Phosphoserine; by PKB/AKT1 and MAPKAPK2 modification is found at Ser-203. The interval Ser-273–Asp-338 is disordered. Positions Tyr-305–Ser-318 are enriched in low complexity. At Ser-318 the chain carries Phosphoserine. The residue at position 334 (Ser-334) is a Phosphoserine; by RPS6KA1.

As to quaternary structure, associates with the cytoplasmic CCR4-NOT deadenylase and RNA exosome complexes to trigger ARE-containing mRNA deadenylation and decay processes. Interacts with CNOT1. Interacts (via N-terminus) with CNOT6. Interacts with CNOT7; this interaction is inhibited in response to phorbol 12-myristate 13-acetate (PMA) treatment in a p38 MAPK-dependent manner. Interacts with DCP1A. Interacts (via N-terminus) with DCP2. Interacts (via N-terminus) with EXOSC2. Interacts with XRN1. Interacts (via phosphorylated form) with YWHAB; this interaction occurs in a protein kinase AKT1-dependent manner. Interacts (via phosphorylated form) with YWHAZ; this interaction occurs in a p38 MAPK- and AKT-signaling pathways. Phosphorylated. Phosphorylated by RPS6KA1 at Ser-334 upon phorbol 12-myristate 13-acetate (PMA) treatment; this phosphorylation results in dissociation of the CCR4-NOT deadenylase complex and induces p38 MAPK-mediated stabilization of the low-density lipoprotein receptor LDLR mRNA. Phosphorylated by protein kinase AKT1 at Ser-92 and Ser-203 in response to insulin; these phosphorylations stabilize ZFP36L1, increase the association with 14-3-3 proteins and mediate ARE-containing mRNA stabilization. AKT1-mediated phosphorylation at Ser-92 does not impair ARE-containing RNA-binding. Phosphorylated at Ser-54, Ser-92 and Ser-203 by MAPKAPK2; these phosphorylations increase the association with 14-3-3 proteins and mediate ARE-containing mRNA stabilization in a protein kinase AKT1-independent manner. MAPKAPK2-mediated phosphorylations at Ser-54, Ser-92 and Ser-203 do not impair ARE-containing RNA-binding. Phosphorylations increase the association with 14-3-3 proteins and mediate ARE-containing mRNA stabilization during early adipogenesis in a p38 MAPK- and AKT-dependent manner. Post-translationally, ubiquitinated. Ubiquitination leads to proteasomal degradation, a process inhibited by phosphorylations at Ser-90, Ser-92 and Ser-203. As to expression, expressed in preadipocytes and adipocytes. Expressed in the proximal and distal tubules in the renal cortex (at protein level). Expressed in ovary, heart, kidney, lung, spleen and thymus. Weakly expressed in brain, liver and testis. Expressed in osteoblasts. Expressed in embryonic stem cells (ESCs). Expressed through B lymphocyte development.

It is found in the nucleus. Its subcellular location is the cytoplasm. It localises to the cytoplasmic granule. The protein resides in the P-body. Its function is as follows. Zinc-finger RNA-binding protein that destabilizes several cytoplasmic AU-rich element (ARE)-containing mRNA transcripts by promoting their poly(A) tail removal or deadenylation, and hence provide a mechanism for attenuating protein synthesis. Acts as a 3'-untranslated region (UTR) ARE mRNA-binding adapter protein to communicate signaling events to the mRNA decay machinery. Functions by recruiting the CCR4-NOT deadenylating complex and components of the cytoplasmic RNA decay machinery to the bound ARE-containing mRNAs, and hence promotes ARE-mediated mRNA deadenylation and decay processes. Also induces the degradation of ARE-containing mRNAs even in absence of poly(A) tail. Binds to 3'-UTR ARE of numerous mRNAs. Positively regulates early adipogenesis by promoting ARE-mediated mRNA decay of immediate early genes (IEGs). Promotes ARE-mediated mRNA decay of mineralocorticoid receptor NR3C2 mRNA in response to hypertonic stress. Negatively regulates hematopoietic/erythroid cell differentiation by promoting ARE-mediated mRNA decay of the transcription factor STAT5B mRNA. Positively regulates monocyte/macrophage cell differentiation by promoting ARE-mediated mRNA decay of the cyclin-dependent kinase CDK6 mRNA. Promotes degradation of ARE-containing pluripotency-associated mRNAs in embryonic stem cells (ESCs), such as NANOG, through a fibroblast growth factor (FGF)-induced MAPK-dependent signaling pathway, and hence attenuates ESC self-renewal and positively regulates mesendoderm differentiation. May play a role in mediating pro-apoptotic effects in malignant B-cells by promoting ARE-mediated mRNA decay of BCL2 mRNA. In association with ZFP36L2 maintains quiescence on developing B lymphocytes by promoting ARE-mediated decay of several mRNAs encoding cell cycle regulators that help B cells progress through the cell cycle, and hence ensuring accurate variable-diversity-joining (VDJ) recombination and functional immune cell formation. Together with ZFP36L2 is also necessary for thymocyte development and prevention of T-cell acute lymphoblastic leukemia (T-ALL) transformation by promoting ARE-mediated mRNA decay of the oncogenic transcription factor NOTCH1 mRNA. Involved in the delivery of target ARE-mRNAs to processing bodies (PBs). In addition to its cytosolic mRNA-decay function, plays a role in the regulation of nuclear mRNA 3'-end processing; modulates mRNA 3'-end maturation efficiency of the DLL4 mRNA through binding with an ARE embedded in a weak noncanonical polyadenylation (poly(A)) signal in endothelial cells. Also involved in the regulation of stress granule (SG) and P-body (PB) formation and fusion. Plays a role in vasculogenesis and endocardial development. Involved in the regulation of keratinocyte proliferation, differentiation and apoptosis. Plays a role in myoblast cell differentiation. The protein is mRNA decay activator protein ZFP36L1 of Mus musculus (Mouse).